The primary structure comprises 93 residues: RNA silencing suppressor (93 aa).

Residues 44 to 47 (CKRR) are basic. The C4-type zinc finger occupies 54-69 (CWRCYRVYPPVCNSKC).

It belongs to the carlaviruses nucleic acid-binding protein family.

Suppressor of viral-induced RNA silencing. The potential mechanism of action is based on sequestering siRNAs. The protein is RNA silencing suppressor of Solanum tuberosum (Potato).